The primary structure comprises 368 residues: Putative J domain-containing protein R445 (368 aa).

The J domain occupies 13 to 83 (DLYKILGLTN…KQRNEYNQRL (71 aa)).

This Acanthamoeba polyphaga mimivirus (APMV) protein is Putative J domain-containing protein R445.